We begin with the raw amino-acid sequence, 144 residues long: Urease subunit beta (144 aa).

A compositionally biased stretch (low complexity) spans 110–119 (HAAPAAPAIP). Residues 110–144 (HAAPAAPAIPARHESAAGDAPSPLKERAGFDNETR) form a disordered region. Over residues 133-144 (LKERAGFDNETR) the composition is skewed to basic and acidic residues.

It belongs to the urease beta subunit family. In terms of assembly, heterotrimer of UreA (gamma), UreB (beta) and UreC (alpha) subunits. Three heterotrimers associate to form the active enzyme.

It localises to the cytoplasm. The enzyme catalyses urea + 2 H2O + H(+) = hydrogencarbonate + 2 NH4(+). It functions in the pathway nitrogen metabolism; urea degradation; CO(2) and NH(3) from urea (urease route): step 1/1. In Micrococcus luteus (strain ATCC 4698 / DSM 20030 / JCM 1464 / CCM 169 / CCUG 5858 / IAM 1056 / NBRC 3333 / NCIMB 9278 / NCTC 2665 / VKM Ac-2230) (Micrococcus lysodeikticus), this protein is Urease subunit beta.